The chain runs to 1025 residues: Multidrug resistance protein MdtC (1025 aa).

12 helical membrane-spanning segments follow: residues 3–23 (FFALFIYRPVATILLSVAITL), 333–353 (EVEQTLIISVALVILVVFLFL), 360–380 (IIPAVAVPVSLIGTFAAMYLC), 387–407 (LSLMALTIATGFVVDDAIVVL), 431–451 (VGFTVLSMSLSLVAVFLPLLL), 463–483 (FAVTLSVAIGISLLVSLTLTP), 528–548 (LVGVVLLGTIALNIWLYISIP), 853–873 (VILIIAAIATVYIVLGILYES), 875–895 (VHPLTILSTLPSAGVGALLAL), 897–917 (LFNAPFSLIALIGIMLLIGIV), 953–973 (PIMMTTLAALFGALPLVLSGG), and 984–1004 (ITIVGGLVMSQLLTLYTTPVV).

Belongs to the resistance-nodulation-cell division (RND) (TC 2.A.6) family. MdtC subfamily. As to quaternary structure, part of a tripartite efflux system composed of MdtA, MdtB and MdtC. MdtC forms a heteromultimer with MdtB.

Its subcellular location is the cell inner membrane. The MdtABC tripartite complex confers resistance against novobiocin and deoxycholate. The sequence is that of Multidrug resistance protein MdtC from Escherichia coli O1:K1 / APEC.